Consider the following 20-residue polypeptide: GMP synthase [glutamine-hydrolyzing] (20 aa).

A GMPS ATP-PPase domain is found at 1–20 (ALGDQLLSVFVDHTLVDEVA).

In terms of assembly, homodimer.

It carries out the reaction XMP + L-glutamine + ATP + H2O = GMP + L-glutamate + AMP + diphosphate + 2 H(+). The protein operates within purine metabolism; GMP biosynthesis; GMP from XMP (L-Gln route): step 1/1. Catalyzes the synthesis of GMP from XMP. The chain is GMP synthase [glutamine-hydrolyzing] (guaA) from Fructilactobacillus sanfranciscensis (Lactobacillus sanfranciscensis).